A 640-amino-acid polypeptide reads, in one-letter code: ATP-dependent rRNA helicase spb4 (640 aa).

A Q motif motif is present at residues 14 to 42 (WDAVTPALSEWVLEAMSSMGFTRMTPVQA). In terms of domain architecture, Helicase ATP-binding spans 45-249 (IPLFMAHKDV…RVGLRNPVKV (205 aa)). Residue 58 to 65 (AVTGSGKT) participates in ATP binding. A DEAD box motif is present at residues 197–200 (DEAD). A Helicase C-terminal domain is found at 283-437 (ALKRILSSVQ…LITFSDADAA (155 aa)). Residues 521–629 (AYKDKQREKR…AAKAAGAKAD (109 aa)) are a coiled coil. Disordered stretches follow at residues 531-595 (RKEL…EKQK) and 607-640 (RKKN…QGFD). The segment covering 568–582 (KKLKRREQKKSKHEK) has biased composition (basic residues). Over residues 583–595 (ARWEKMTEEEKQK) the composition is skewed to basic and acidic residues. Residues 630–640 (GDDEEEFQGFD) show a composition bias toward acidic residues.

It belongs to the DEAD box helicase family. DDX55/SPB4 subfamily. In terms of assembly, component of pre-60S ribosomal complexes.

The protein resides in the nucleus. It is found in the nucleolus. The catalysed reaction is ATP + H2O = ADP + phosphate + H(+). ATP-binding RNA helicase involved in the biogenesis of 60S ribosomal subunits. Binds 90S pre-ribosomal particles and dissociates from pre-60S ribosomal particles after processing of 27SB pre-rRNA. Required for the normal formation of 18S rRNA through the processing of pre-rRNAs at sites A0, A1 and A2, and the normal formation of 25S and 5.8S rRNAs through the processing of pre-rRNAs at sites C1 and C2. This Neosartorya fischeri (strain ATCC 1020 / DSM 3700 / CBS 544.65 / FGSC A1164 / JCM 1740 / NRRL 181 / WB 181) (Aspergillus fischerianus) protein is ATP-dependent rRNA helicase spb4.